Here is a 217-residue protein sequence, read N- to C-terminus: ATP-dependent Clp protease proteolytic subunit (217 aa).

The active-site Nucleophile is the S119. H144 is an active-site residue.

It belongs to the peptidase S14 family. As to quaternary structure, fourteen ClpP subunits assemble into 2 heptameric rings which stack back to back to give a disk-like structure with a central cavity, resembling the structure of eukaryotic proteasomes.

It is found in the cytoplasm. It catalyses the reaction Hydrolysis of proteins to small peptides in the presence of ATP and magnesium. alpha-casein is the usual test substrate. In the absence of ATP, only oligopeptides shorter than five residues are hydrolyzed (such as succinyl-Leu-Tyr-|-NHMec, and Leu-Tyr-Leu-|-Tyr-Trp, in which cleavage of the -Tyr-|-Leu- and -Tyr-|-Trp bonds also occurs).. Functionally, cleaves peptides in various proteins in a process that requires ATP hydrolysis. Has a chymotrypsin-like activity. Plays a major role in the degradation of misfolded proteins. The sequence is that of ATP-dependent Clp protease proteolytic subunit from Bordetella bronchiseptica (strain ATCC BAA-588 / NCTC 13252 / RB50) (Alcaligenes bronchisepticus).